A 273-amino-acid chain; its full sequence is NADPH-dependent 7-cyano-7-deazaguanine reductase (273 aa).

Position 81 to 83 (81 to 83) interacts with substrate; sequence VES. 83–84 is a binding site for NADPH; sequence SK. Cys-179 functions as the Thioimide intermediate in the catalytic mechanism. The active-site Proton donor is Asp-186. Residue 218–219 coordinates substrate; sequence AE. 247-248 contributes to the NADPH binding site; sequence RG.

This sequence belongs to the GTP cyclohydrolase I family. QueF type 2 subfamily. Homodimer.

Its subcellular location is the cytoplasm. It carries out the reaction 7-aminomethyl-7-carbaguanine + 2 NADP(+) = 7-cyano-7-deazaguanine + 2 NADPH + 3 H(+). It functions in the pathway tRNA modification; tRNA-queuosine biosynthesis. In terms of biological role, catalyzes the NADPH-dependent reduction of 7-cyano-7-deazaguanine (preQ0) to 7-aminomethyl-7-deazaguanine (preQ1). This chain is NADPH-dependent 7-cyano-7-deazaguanine reductase, found in Rickettsia prowazekii (strain Madrid E).